We begin with the raw amino-acid sequence, 221 residues long: Probable GTP-binding protein EngB (221 aa).

In terms of domain architecture, EngB-type G spans 32-205 (GIPQIAFAGR…RKIVDSLITT (174 aa)). GTP is bound by residues 40 to 47 (GRSNAGKS), 67 to 71 (GKTKL), 85 to 88 (DLPG), 152 to 155 (TKID), and 184 to 186 (VSN). Serine 47 and threonine 69 together coordinate Mg(2+).

Belongs to the TRAFAC class TrmE-Era-EngA-EngB-Septin-like GTPase superfamily. EngB GTPase family. The cofactor is Mg(2+).

Its function is as follows. Necessary for normal cell division and for the maintenance of normal septation. The sequence is that of Probable GTP-binding protein EngB from Leptospira borgpetersenii serovar Hardjo-bovis (strain JB197).